A 707-amino-acid polypeptide reads, in one-letter code: Tubulin polyglutamylase ttll-11 (707 aa).

The region spanning 124-488 (RFTIDTSRAK…PLVRDTLLLV (365 aa)) is the TTL domain. ATP-binding positions include 279 to 282 (QEYV), Lys-293, and Asp-295. Residues 675–707 (RNRSGTNGRKQNFTDDNNNPNSFAHLPKINERL) form a disordered region. Residues 677-696 (RSGTNGRKQNFTDDNNNPNS) show a composition bias toward polar residues.

It belongs to the tubulin--tyrosine ligase family. In terms of tissue distribution, expressed in amphid sensory neurons. Weakly expressed in body wall muscles. Isoform a: Specifically expressed in ciliated sensory neurons in the head, including the IL1s, OLQ, head CEP, and amphid neurons. In the male tail, expressed in HOA, RnA, and phasmid neurons. Isoform b: Specifically expressed in male and hermaphrodite IL2 ciliated sensory neurons, and in male-specific CEM, HOB and RnB ciliated sensory neurons.

The protein resides in the cell projection. It localises to the axon. Its subcellular location is the perikaryon. It is found in the dendrite. The protein localises to the cilium. The protein resides in the extracellular vesicle. It carries out the reaction L-glutamyl-[protein] + L-glutamate + ATP = gamma-L-glutamyl-L-glutamyl-[protein] + ADP + phosphate + H(+). In terms of biological role, polyglutamylase which preferentially modifies tubulin. Involved in the side-chain initiation step of the polyglutamylation reaction. By controlling tubulin glutamylation, regulates ciliary specialization and motor-based transport. Promotes the formation of A and B tubule singlets by splaying microtubule doublets in cilia. Together with ttll-4 and 5, required for male mating. Its function is as follows. Specifically promotes tubulin glutamylation in a subset of ciliated neurons including amphid, phasmid, CEP and RnA neurons. Specifically promotes tubulin glutamylation in male ciliated CEM, HOB and RnB neurons that release bioactive extracellular vesicles. Regulates the localization of TRP channel pdk-2 in male CEM, HOB and RnB neurons. Regulates the environmental release of bioactive extracellular vesicles in cilia. This chain is Tubulin polyglutamylase ttll-11, found in Caenorhabditis elegans.